Here is a 279-residue protein sequence, read N- to C-terminus: Putative pyruvate, phosphate dikinase regulatory protein (279 aa).

156 to 163 (GISRVGKT) contacts ADP.

The protein belongs to the pyruvate, phosphate/water dikinase regulatory protein family. PDRP subfamily.

It catalyses the reaction N(tele)-phospho-L-histidyl/L-threonyl-[pyruvate, phosphate dikinase] + ADP = N(tele)-phospho-L-histidyl/O-phospho-L-threonyl-[pyruvate, phosphate dikinase] + AMP + H(+). It carries out the reaction N(tele)-phospho-L-histidyl/O-phospho-L-threonyl-[pyruvate, phosphate dikinase] + phosphate + H(+) = N(tele)-phospho-L-histidyl/L-threonyl-[pyruvate, phosphate dikinase] + diphosphate. Bifunctional serine/threonine kinase and phosphorylase involved in the regulation of the pyruvate, phosphate dikinase (PPDK) by catalyzing its phosphorylation/dephosphorylation. This is Putative pyruvate, phosphate dikinase regulatory protein from Chloroflexus aurantiacus (strain ATCC 29366 / DSM 635 / J-10-fl).